The primary structure comprises 81 residues: Cytochrome c oxidase subunit 7A1, mitochondrial (81 aa).

A mitochondrion-targeting transit peptide spans 1–21 (MRHLLGLPQLASRAFSTTVRQ). Residues 51-72 (ILYRLTMTLTVVGTGYSLYWLL) form a helical membrane-spanning segment.

The protein belongs to the cytochrome c oxidase VIIa family. In terms of assembly, component of the complex IV (CIV, cytochrome c oxidase). The complex exists as a monomer or a dimer and forms supercomplexes (SCs) in the inner mitochondrial membrane with NADH-ubiquinone oxidoreductase (complex I, CI) and ubiquinol-cytochrome c oxidoreductase (cytochrome b-c1 complex, complex III, CIII), resulting in different assemblies (supercomplex SCI(1)III(2)IV(1) and megacomplex MCI(2)III(2)IV(2)).

Its subcellular location is the mitochondrion inner membrane. It functions in the pathway energy metabolism; oxidative phosphorylation. In terms of biological role, component of the mitochondrial respiratory complex IV (CIV, also named cytochrome c oxidase complex), the last enzyme in the mitochondrial electron transport chain which drives oxidative phosphorylation. The CIV complex is the component of the respiratory chain that catalyzes the reduction of oxygen to water. Acts as an assembly factor that specifically drives the homodimerization of CIV complexes, mediating the formation of mitochondrial respiratory supercomplexes (respirasomes) containing two CIV: supercomplxes with two molecules of CIV show improved activity. The chain is Cytochrome c oxidase subunit 7A1, mitochondrial from Danio rerio (Zebrafish).